The chain runs to 307 residues: UDP-3-O-acyl-N-acetylglucosamine deacetylase (307 aa).

Residues His78, His235, and Asp239 each coordinate Zn(2+). The Proton donor role is filled by His262.

It belongs to the LpxC family. It depends on Zn(2+) as a cofactor.

It catalyses the reaction a UDP-3-O-[(3R)-3-hydroxyacyl]-N-acetyl-alpha-D-glucosamine + H2O = a UDP-3-O-[(3R)-3-hydroxyacyl]-alpha-D-glucosamine + acetate. The protein operates within glycolipid biosynthesis; lipid IV(A) biosynthesis; lipid IV(A) from (3R)-3-hydroxytetradecanoyl-[acyl-carrier-protein] and UDP-N-acetyl-alpha-D-glucosamine: step 2/6. Functionally, catalyzes the hydrolysis of UDP-3-O-myristoyl-N-acetylglucosamine to form UDP-3-O-myristoylglucosamine and acetate, the committed step in lipid A biosynthesis. This chain is UDP-3-O-acyl-N-acetylglucosamine deacetylase, found in Geotalea uraniireducens (strain Rf4) (Geobacter uraniireducens).